The primary structure comprises 267 residues: Oxidoreductase ordB (267 aa).

Belongs to the avfA family.

It participates in mycotoxin biosynthesis. Functionally, oxidoreductase; part of the fragmented gene cluster that mediates the biosynthesis of dothistromin (DOTH), a polyketide toxin very similar in structure to the aflatoxin precursor, versicolorin B. The first step of the pathway is the conversion of acetate to norsolorinic acid (NOR) and requires the fatty acid synthase subunits hexA and hexB, as well as the polyketide synthase pksA. PksA combines a hexanoyl starter unit and 7 malonyl-CoA extender units to synthesize the precursor NOR. The hexanoyl starter unit is provided to the acyl-carrier protein (ACP) domain by the fungal fatty acid synthase hexA/hexB. The second step is the conversion of NOR to averantin (AVN) and requires the norsolorinic acid ketoreductase nor1, which catalyzes the dehydration of norsolorinic acid to form (1'S)-averantin. The cytochrome P450 monooxygenase avnA then catalyzes the hydroxylation of AVN to 5'hydroxyaverantin (HAVN). The next step is performed by adhA that transforms HAVN to averufin (AVF). Averufin might then be converted to hydroxyversicolorone by cypX and avfA. Hydroxyversicolorone is further converted versiconal hemiacetal acetate (VHA) by moxY. VHA is then the substrate for the versiconal hemiacetal acetate esterase est1 to yield versiconal (VAL). Versicolorin B synthase vbsA then converts VAL to versicolorin B (VERB) by closing the bisfuran ring. Then, the activity of the versicolorin B desaturase verB leads to versicolorin A (VERA). DotB, a predicted chloroperoxidase, may perform epoxidation of the A-ring of VERA. Alternatively, a cytochrome P450, such as cypX or avnA could catalyze this step. It is also possible that another, uncharacterized, cytochrome P450 enzyme is responsible for this step. Opening of the epoxide could potentially be achieved by the epoxide hydrolase epoA. However, epoA seems not to be required for DOTH biosynthesis, but other epoxide hydrolases may have the ability to complement this hydrolysis. Alternatively, opening of the epoxide ring could be achieved non-enzymatically. The next step is the deoxygenation of ring A to yield the 5,8-dihydroxyanthraquinone which is most likely catalyzed by the NADPH dehydrogenase encoded by ver1. The last stages of DOTH biosynthesis are proposed to involve hydroxylation of the bisfuran. OrdB and norB might have oxidative roles here. An alternative possibility is that cytochrome P450 monoogenases such as avnA and cypX might perform these steps in addition to previously proposed steps. The sequence is that of Oxidoreductase ordB from Dothistroma septosporum (strain NZE10 / CBS 128990) (Red band needle blight fungus).